The following is a 166-amino-acid chain: Small ribosomal subunit protein uS5 (166 aa).

Residues 12 to 75 form the S5 DRBM domain; sequence YIEKLVQVNR…EAARRNMIQV (64 aa).

The protein belongs to the universal ribosomal protein uS5 family. As to quaternary structure, part of the 30S ribosomal subunit. Contacts proteins S4 and S8.

Its function is as follows. With S4 and S12 plays an important role in translational accuracy. In terms of biological role, located at the back of the 30S subunit body where it stabilizes the conformation of the head with respect to the body. The protein is Small ribosomal subunit protein uS5 of Pseudomonas savastanoi pv. phaseolicola (strain 1448A / Race 6) (Pseudomonas syringae pv. phaseolicola (strain 1448A / Race 6)).